The primary structure comprises 316 residues: Malate dehydrogenase 2 (316 aa).

NAD(+)-binding positions include 10-15 (GGGQIG) and Asp34. Substrate-binding residues include Arg83 and Arg89. Residues Asn96 and 119-121 (ISN) contribute to the NAD(+) site. 2 residues coordinate substrate: Asn121 and Arg152. The Proton acceptor role is filled by His176.

This sequence belongs to the LDH/MDH superfamily. MDH type 3 family.

It carries out the reaction (S)-malate + NAD(+) = oxaloacetate + NADH + H(+). Catalyzes the reversible oxidation of malate to oxaloacetate. In Anaeromyxobacter dehalogenans (strain 2CP-C), this protein is Malate dehydrogenase 2.